Reading from the N-terminus, the 65-residue chain is Large ribosomal subunit protein uL29 (65 aa).

This sequence belongs to the universal ribosomal protein uL29 family.

This chain is Large ribosomal subunit protein uL29, found in Coxiella burnetii (strain CbuK_Q154) (Coxiella burnetii (strain Q154)).